A 478-amino-acid chain; its full sequence is 2,5-dioxopentanoate dehydrogenase (478 aa).

NADP(+) contacts are provided by residues 148–149 (WN), 172–175 (KPAT), and 225–226 (GS). Glu249 functions as the Proton acceptor in the catalytic mechanism. Cys283 functions as the Nucleophile in the catalytic mechanism. Glu379 is an NADP(+) binding site.

It belongs to the aldehyde dehydrogenase family. Homotetramer.

The catalysed reaction is 2,5-dioxopentanoate + NADP(+) + H2O = 2-oxoglutarate + NADPH + 2 H(+). Its function is as follows. 2,5-dioxopentanoate dehydrogenase involved in the degradation of pentoses such as D-arabinose or D-xylose, a major component of hemicelluloses such as xylan. Catalyzes the fifth reaction in the pentose utilization pathway through dehydratation of 2,5-dioxopentanoate into 2-oxoglutarate. Also shows dehydrogenase activity toward glycolaldehyde and DL-glyceraldehyde. This Saccharolobus solfataricus (strain ATCC 35092 / DSM 1617 / JCM 11322 / P2) (Sulfolobus solfataricus) protein is 2,5-dioxopentanoate dehydrogenase.